Reading from the N-terminus, the 604-residue chain is Elongation factor 4 (604 aa).

Residues 7–189 (SKIRNFCIIA…SIVHLVPPPS (183 aa)) enclose the tr-type G domain. GTP contacts are provided by residues 19–24 (DHGKST) and 136–139 (NKID).

This sequence belongs to the TRAFAC class translation factor GTPase superfamily. Classic translation factor GTPase family. LepA subfamily.

It localises to the cell inner membrane. It carries out the reaction GTP + H2O = GDP + phosphate + H(+). Its function is as follows. Required for accurate and efficient protein synthesis under certain stress conditions. May act as a fidelity factor of the translation reaction, by catalyzing a one-codon backward translocation of tRNAs on improperly translocated ribosomes. Back-translocation proceeds from a post-translocation (POST) complex to a pre-translocation (PRE) complex, thus giving elongation factor G a second chance to translocate the tRNAs correctly. Binds to ribosomes in a GTP-dependent manner. The sequence is that of Elongation factor 4 from Synechococcus sp. (strain ATCC 27144 / PCC 6301 / SAUG 1402/1) (Anacystis nidulans).